The sequence spans 241 residues: ATP synthase subunit a (241 aa).

5 helical membrane-spanning segments follow: residues 30 to 50 (GQVF…VVVG), 91 to 111 (FIGT…LVPW), 128 to 148 (INTT…AGLS), 193 to 213 (LVVA…VMFL), and 214 to 234 (GLFT…YYIG).

The protein belongs to the ATPase A chain family. As to quaternary structure, F-type ATPases have 2 components, CF(1) - the catalytic core - and CF(0) - the membrane proton channel. CF(1) has five subunits: alpha(3), beta(3), gamma(1), delta(1), epsilon(1). CF(0) has four main subunits: a, b, b' and c.

The protein localises to the cellular thylakoid membrane. Key component of the proton channel; it plays a direct role in the translocation of protons across the membrane. In Prochlorococcus marinus (strain MIT 9211), this protein is ATP synthase subunit a.